The chain runs to 348 residues: Dihydroorotase (348 aa).

2 residues coordinate Zn(2+): H17 and H19. Residues 19–21 (HLR) and N45 contribute to the substrate site. Zn(2+)-binding residues include K103, H140, and H178. N6-carboxylysine is present on K103. H140 contacts substrate. Substrate is bound at residue L223. D251 is a binding site for Zn(2+). The active site involves D251. Substrate is bound by residues H255 and A267.

It belongs to the metallo-dependent hydrolases superfamily. DHOase family. Class II DHOase subfamily. As to quaternary structure, homodimer. Zn(2+) serves as cofactor.

It carries out the reaction (S)-dihydroorotate + H2O = N-carbamoyl-L-aspartate + H(+). It participates in pyrimidine metabolism; UMP biosynthesis via de novo pathway; (S)-dihydroorotate from bicarbonate: step 3/3. Catalyzes the reversible cyclization of carbamoyl aspartate to dihydroorotate. This chain is Dihydroorotase, found in Salmonella typhi.